A 235-amino-acid chain; its full sequence is MRPSGRNNDQLRNLKVTHNFTKHAEGSVLIEFGDTKVICTASVVAGVPKFKKDSGEGWLTAEYGMLPRSTHTRMDREAARGKQSGRTQEIQRLIGRALRASVDLTAIGENTIKVDCDVIQADGGTRTASITGASLAIADAIEYMKQNGILDEQANPLLSQVAAISVGIYNNEPVLDLDYDEDSNAETDMNVVMNSNGGIIEIQGTAEGKDFSEEEFAKMLGLAKKGIKEIFATVF.

Phosphate contacts are provided by residues Arg-86 and 124–126; that span reads GTR.

It belongs to the RNase PH family. As to quaternary structure, homohexameric ring arranged as a trimer of dimers.

The catalysed reaction is tRNA(n+1) + phosphate = tRNA(n) + a ribonucleoside 5'-diphosphate. Its function is as follows. Phosphorolytic 3'-5' exoribonuclease that plays an important role in tRNA 3'-end maturation. Removes nucleotide residues following the 3'-CCA terminus of tRNAs; can also add nucleotides to the ends of RNA molecules by using nucleoside diphosphates as substrates, but this may not be physiologically important. Probably plays a role in initiation of 16S rRNA degradation (leading to ribosome degradation) during starvation. The polypeptide is Ribonuclease PH (Francisella tularensis subsp. holarctica (strain FTNF002-00 / FTA)).